The primary structure comprises 642 residues: Poly(A) RNA polymerase protein 1 (642 aa).

Disordered stretches follow at residues 1 to 29 (MTRLKAKYSPTKGKRKEDKHTKRMRKSSF) and 84 to 104 (TSSEDEQRAESSKRNNSLEDN). Over residues 88–100 (DEQRAESSKRNNS) the composition is skewed to basic and acidic residues. Mg(2+) is bound by residues Asp-233 and Asp-235. 4 residues coordinate ATP: Gly-298, Lys-323, Asn-428, and Arg-432. Positions 368 to 428 (NLGVLLIDFF…AIQDPGDPNN (61 aa)) constitute a PAP-associated domain. Residues 535–642 (AKKKQKAKKD…DYWLSKGQAL (108 aa)) are disordered. The span at 578-588 (QGSLLHQNNLS) shows a compositional bias: polar residues. A phosphoserine mark is found at Ser-596 and Ser-602. A compositionally biased stretch (basic and acidic residues) spans 604–635 (QDQKGRDTPSGQDEKSPLETKTVDAQTRRDYW).

It belongs to the DNA polymerase type-B-like family. As to quaternary structure, component of the TRAMP5 complex composed of at least AIR1, MTR4 and TFR5. Interacts with POL2, DPB2 and DPB11. It depends on Mg(2+) as a cofactor. Mn(2+) is required as a cofactor.

The protein resides in the nucleus. It is found in the nucleolus. The catalysed reaction is RNA(n) + ATP = RNA(n)-3'-adenine ribonucleotide + diphosphate. Catalytic subunit of the TRAMP5 complex which has a poly(A) RNA polymerase activity and is involved in a post-transcriptional quality control mechanism limiting inappropriate expression of genetic information. Polyadenylation is required for the degradative activity of the exosome on several of its nuclear RNA substrates like cryptic transcripts generated by RNA polymerase II and III, or hypomethylated pre-tRNAi-Met. Polyadenylates RNA processing and degradation intermediates of snRNAs, snoRNAs and mRNAs that accumulate in strains lacking a functional exosome. TRF5 is also required for proper nuclear division in mitosis and sister chromatid cohesion. Involved in the regulation of histone mRNA levels. May mediate mitotic chromosome condensation. This is Poly(A) RNA polymerase protein 1 (TRF5) from Saccharomyces cerevisiae (strain ATCC 204508 / S288c) (Baker's yeast).